Here is a 130-residue protein sequence, read N- to C-terminus: Small ribosomal subunit protein uS9 (130 aa).

Belongs to the universal ribosomal protein uS9 family.

This Idiomarina loihiensis (strain ATCC BAA-735 / DSM 15497 / L2-TR) protein is Small ribosomal subunit protein uS9.